The chain runs to 780 residues: Protein phosphatase 1 regulatory subunit 21 (780 aa).

Coiled-coil stretches lie at residues 1–207 (MASA…LKTL) and 556–607 (ESRE…LKNT). The segment at 84–104 (EPRGKKNKKSGESSSQLSQEQ) is disordered. Residues 95-104 (ESSSQLSQEQ) show a composition bias toward low complexity. A Phosphothreonine modification is found at Thr652. Positions 693–742 (YAECRALSKRLALAEKSKEALTEEMKLASQNISRLQDELTTTKRSYEDQL) form a coiled coil. Residues 760–780 (REEIDTLKMSSKGNSKKNKSR) are disordered.

As to quaternary structure, component of the FERRY complex, composed of five subunits: TBCK, PPP1R21, FERRY3, CRYZL1 and GATAD1, with a ratio of 1:2:1:2:4 respectively. PPP1R21 serves as a binding hub connecting all five complex subunits to mediate the binding to specific mitochondrial mRNAs. Interacts with the GTP-bound form of RAB5A (via its C-terminal region); linking the mRNP complex onto trafficking endosomes for active mRNA transport. Interacts with PPP1CA.

Its subcellular location is the early endosome. Its function is as follows. Component of the FERRY complex (Five-subunit Endosomal Rab5 and RNA/ribosome intermediary). The FERRY complex directly interacts with mRNAs and RAB5A, and functions as a RAB5A effector involved in the localization and the distribution of specific mRNAs most likely by mediating their endosomal transport. The complex recruits mRNAs and ribosomes to early endosomes through direct mRNA-interaction. In the complex, PPP1R21 serves as a binding hub connecting all five complex subunits and mediating the binding to mRNA and early endosomes via RAB5A. Putative regulator of protein phosphatase 1 (PP1) activity. May play a role in the endosomal sorting process or in endosome maturation pathway. The protein is Protein phosphatase 1 regulatory subunit 21 (PPP1R21) of Homo sapiens (Human).